We begin with the raw amino-acid sequence, 1057 residues long: Carbamoyl phosphate synthase large chain (1057 aa).

Positions 1-401 (MPKRNDIKTI…SLLKAIRSLE (401 aa)) are carboxyphosphate synthetic domain. Residues R129, R169, G175, G176, K208, I210, E215, G241, I242, H243, Q284, and E298 each contribute to the ATP site. Residues 133–327 (RNLMNELNEP…IAKLAAKIAV (195 aa)) form the ATP-grasp 1 domain. Mg(2+)-binding residues include Q284, E298, and N300. Positions 284, 298, and 300 each coordinate Mn(2+). The oligomerization domain stretch occupies residues 402-546 (YGVHHLGLPN…YGTYETENES (145 aa)). Positions 547–929 (IRSDKKKVVV…ALYKGLVASG (383 aa)) are carbamoyl phosphate synthetic domain. Residues 671-861 (EALMQRIEIP…MANLAMKAIL (191 aa)) enclose the ATP-grasp 2 domain. R707, R746, L748, E752, G777, V778, H779, S780, Q820, and E832 together coordinate ATP. Positions 820, 832, and 834 each coordinate Mg(2+). Mn(2+) is bound by residues Q820, E832, and N834. The MGS-like domain maps to 930 to 1057 (LQVKDHGTVL…ESMTFNMNQM (128 aa)). Residues 930–1057 (LQVKDHGTVL…ESMTFNMNQM (128 aa)) form an allosteric domain region.

Belongs to the CarB family. As to quaternary structure, composed of two chains; the small (or glutamine) chain promotes the hydrolysis of glutamine to ammonia, which is used by the large (or ammonia) chain to synthesize carbamoyl phosphate. Tetramer of heterodimers (alpha,beta)4. Requires Mg(2+) as cofactor. It depends on Mn(2+) as a cofactor.

The enzyme catalyses hydrogencarbonate + L-glutamine + 2 ATP + H2O = carbamoyl phosphate + L-glutamate + 2 ADP + phosphate + 2 H(+). The catalysed reaction is hydrogencarbonate + NH4(+) + 2 ATP = carbamoyl phosphate + 2 ADP + phosphate + 2 H(+). Its pathway is amino-acid biosynthesis; L-arginine biosynthesis; carbamoyl phosphate from bicarbonate: step 1/1. The protein operates within pyrimidine metabolism; UMP biosynthesis via de novo pathway; (S)-dihydroorotate from bicarbonate: step 1/3. Functionally, large subunit of the glutamine-dependent carbamoyl phosphate synthetase (CPSase). CPSase catalyzes the formation of carbamoyl phosphate from the ammonia moiety of glutamine, carbonate, and phosphate donated by ATP, constituting the first step of 2 biosynthetic pathways, one leading to arginine and/or urea and the other to pyrimidine nucleotides. The large subunit (synthetase) binds the substrates ammonia (free or transferred from glutamine from the small subunit), hydrogencarbonate and ATP and carries out an ATP-coupled ligase reaction, activating hydrogencarbonate by forming carboxy phosphate which reacts with ammonia to form carbamoyl phosphate. This chain is Carbamoyl phosphate synthase large chain, found in Macrococcus caseolyticus (strain JCSC5402) (Macrococcoides caseolyticum).